The following is a 25-amino-acid chain: Glutamine synthetase 2 isozyme (25 aa).

The protein belongs to the glutamine synthetase family. In terms of assembly, homohexamer.

The protein resides in the plastid. It is found in the chloroplast. The catalysed reaction is L-glutamate + NH4(+) + ATP = L-glutamine + ADP + phosphate + H(+). Its function is as follows. Plays a key role in the nitrogen metabolism of microorganisms, animals and plants. The polypeptide is Glutamine synthetase 2 isozyme (Emiliania huxleyi (Coccolithophore)).